The primary structure comprises 1069 residues: Regulator of nonsense transcripts 1 (1069 aa).

The disordered stretch occupies residues 1 to 86 (MDDSDDEYSR…SEKSLTEEQH (86 aa)). Positions 28-50 (IGNTQDSQFAYEQFSVPTQSSQA) are enriched in polar residues. The span at 51 to 65 (TDLLPGGTDGTTNDL) shows a compositional bias: low complexity. Positions 77 to 86 (SEKSLTEEQH) are enriched in basic and acidic residues. The Upf1 CH-rich domain occupies 87–244 (EQKLPEHACR…VRMEELWRDH (158 aa)). Zn(2+) contacts are provided by Cys95, Cys98, Cys109, Cys112, Cys117, His127, His131, His137, Cys155, Cys158, Cys181, and Cys185. Residues 95-127 (CRYCGISDPLCVAKCTVCRKWFCNSNDGTSGGH) are C3H. The segment at 109–137 (CTVCRKWFCNSNDGTSGGHIVHHMVRSQH) is CC/SHH/C. A C4 region spans residues 155 to 185 (CYRCGSKNVFNLGFIPGKKDQVVVIICRTPC). ATP contacts are provided by residues Gln450, 467-474 (GPPGTGKT), Gln639, Tyr676, and Glu807. The segment at 966 to 1069 (ARNQKDRRRG…MDDLLFSQDC (104 aa)) is disordered. A compositionally biased stretch (low complexity) spans 991-1013 (SQGMMSQQSQQYPPQGASSQSQY).

Belongs to the DNA2/NAM7 helicase family. Phosphorylated probably by smg-1. Smg-3 and smg-4 are required for phosphorylation.

It is found in the cytoplasm. The catalysed reaction is ATP + H2O = ADP + phosphate + H(+). Its function is as follows. RNA-dependent helicase required for nonsense-mediated decay (NMD) of aberrant mRNAs containing premature stop codons and modulates the expression level of normal mRNAs. Is recruited to mRNAs upon translation termination and undergoes a cycle of phosphorylation and dephosphorylation; its phosphorylation appears to be a key step in NMD. The formation of an smg-2-3-4 surveillance complex is believed to activate NMD. The protein is Regulator of nonsense transcripts 1 (smg-2) of Caenorhabditis elegans.